The primary structure comprises 146 residues: Protein ADM2 (146 aa).

A signal peptide spans 1–25 (MAQLLMVTVTFGCISLLYLLPGTLS). Positions 26–96 (GSLGKGLRPR…HPGPQRHVGS (71 aa)) are excised as a propeptide. The disordered stretch occupies residues 29 to 99 (GKGLRPREPP…PQRHVGSRRP (71 aa)). Cys-108 and Cys-113 form a disulfide bridge. The residue at position 145 (Tyr-145) is a Tyrosine amide.

It belongs to the adrenomedullin family. In terms of tissue distribution, expression was restricted to the intermediate and anterior lobes of the pituitary.

It localises to the secreted. Intermedin/ADM2 is a peptide hormone that plays a role as physiological regulator of gastrointestinal and cardiovascular bioactivities mediated by the CALCRL-RAMPs receptor complexes. Activates the cAMP-dependent pathway through interaction with CALCRL-RAMP3 receptor complex. This is Protein ADM2 from Rattus norvegicus (Rat).